A 256-amino-acid polypeptide reads, in one-letter code: Small ribosomal subunit protein uS3 (256 aa).

A KH type-2 domain is found at isoleucine 39–threonine 121. Residues arginine 227–alanine 256 are disordered. The segment covering proline 246–alanine 256 has biased composition (basic and acidic residues).

It belongs to the universal ribosomal protein uS3 family. As to quaternary structure, part of the 30S ribosomal subunit. Forms a tight complex with proteins S10 and S14.

In terms of biological role, binds the lower part of the 30S subunit head. Binds mRNA in the 70S ribosome, positioning it for translation. The polypeptide is Small ribosomal subunit protein uS3 (Synechococcus sp. (strain JA-2-3B'a(2-13)) (Cyanobacteria bacterium Yellowstone B-Prime)).